The chain runs to 454 residues: Inactive tetrahydroanabasine acetyltransferase pauper allele (454 aa).

The protein belongs to the plant acyltransferase family. Monomer.

This is Inactive tetrahydroanabasine acetyltransferase pauper allele from Lupinus albus (White lupine).